Here is a 250-residue protein sequence, read N- to C-terminus: Snake venom serine protease pictobin (250 aa).

The N-terminal stretch at 1 to 11 (ANLLILQVSYA) is a signal peptide. Residues 12–17 (QKSSEL) constitute a propeptide that is removed on maturation. A Peptidase S1 domain is found at 18–241 (VIGGDECNIN…HLHWILSIIA (224 aa)). Disulfide bonds link Cys-24–Cys-155, Cys-42–Cys-58, Cys-134–Cys-202, Cys-166–Cys-181, and Cys-192–Cys-217. The Charge relay system role is filled by His-57. Residues Asn-71 and Asn-95 are each glycosylated (N-linked (GlcNAc...) asparagine). Asp-102 acts as the Charge relay system in catalysis. Asn-146 and Asn-162 each carry an N-linked (GlcNAc...) asparagine glycan. Residue Ser-196 is the Charge relay system of the active site. Asn-243 carries N-linked (GlcNAc...) asparagine glycosylation.

It belongs to the peptidase S1 family. Snake venom subfamily. Monomer. As to expression, expressed by the venom gland.

It is found in the secreted. Snake venom serine protease that may impair the hemostatic system of the prey. This is Snake venom serine protease pictobin from Bothrops pictus (Desert lancehead).